Reading from the N-terminus, the 182-residue chain is Small ribosomal subunit protein uS4c (182 aa).

Residues 12-31 (PGFTSKRPRSGSDLKNPLRS) are disordered. The region spanning 82–143 (MRLDNILFRL…KQRSKALIQN (62 aa)) is the S4 RNA-binding domain.

Belongs to the universal ribosomal protein uS4 family. Part of the 30S ribosomal subunit. Contacts protein S5. The interaction surface between S4 and S5 is involved in control of translational fidelity.

The protein localises to the plastid. It localises to the chloroplast. Its function is as follows. One of the primary rRNA binding proteins, it binds directly to 16S rRNA where it nucleates assembly of the body of the 30S subunit. With S5 and S12 plays an important role in translational accuracy. The sequence is that of Small ribosomal subunit protein uS4c (rps4) from Hymenocallis littoralis (Beach spider-lily).